Reading from the N-terminus, the 66-residue chain is Gas vesicle protein A (66 aa).

This sequence belongs to the gas vesicle GvpA family. The gas vesicle shell is 2 nm thick and consists of a single layer of this protein. It forms helical ribs nearly perpendicular to the long axis of the vesicle.

Its subcellular location is the gas vesicle shell. Gas vesicles are hollow, gas filled proteinaceous nanostructures found in some microorganisms. During planktonic growth they allow positioning of the organism at a favorable depth for light or nutrient acquisition. GvpA forms the protein shell. This chain is Gas vesicle protein A, found in Thiocapsa pendens (Amoebobacter pendens).